A 444-amino-acid chain; its full sequence is Probable D-serine dehydratase (444 aa).

Lys-118 bears the N6-(pyridoxal phosphate)lysine mark.

Belongs to the serine/threonine dehydratase family. DsdA subfamily. Pyridoxal 5'-phosphate serves as cofactor.

The catalysed reaction is D-serine = pyruvate + NH4(+). In Acinetobacter baumannii (strain ACICU), this protein is Probable D-serine dehydratase.